Here is a 409-residue protein sequence, read N- to C-terminus: Lipoyl synthase, mitochondrial (409 aa).

The tract at residues 21–41 is disordered; that stretch reads QQQVPPSEEPRNESGAANPPL. [4Fe-4S] cluster contacts are provided by Cys125, Cys130, Cys136, Cys159, Cys163, Cys166, and Ser375. Residues 142-364 form the Radical SAM core domain; that stretch reads EEGDGTATAT…EKEALDMGFL (223 aa).

This sequence belongs to the radical SAM superfamily. Lipoyl synthase family. [4Fe-4S] cluster is required as a cofactor.

The protein resides in the mitochondrion. It carries out the reaction [[Fe-S] cluster scaffold protein carrying a second [4Fe-4S](2+) cluster] + N(6)-octanoyl-L-lysyl-[protein] + 2 oxidized [2Fe-2S]-[ferredoxin] + 2 S-adenosyl-L-methionine + 4 H(+) = [[Fe-S] cluster scaffold protein] + N(6)-[(R)-dihydrolipoyl]-L-lysyl-[protein] + 4 Fe(3+) + 2 hydrogen sulfide + 2 5'-deoxyadenosine + 2 L-methionine + 2 reduced [2Fe-2S]-[ferredoxin]. The protein operates within protein modification; protein lipoylation via endogenous pathway; protein N(6)-(lipoyl)lysine from octanoyl-[acyl-carrier-protein]: step 2/2. Catalyzes the radical-mediated insertion of two sulfur atoms into the C-6 and C-8 positions of the octanoyl moiety bound to the lipoyl domains of lipoate-dependent enzymes, thereby converting the octanoylated domains into lipoylated derivatives. The polypeptide is Lipoyl synthase, mitochondrial (Trypanosoma brucei gambiense (strain MHOM/CI/86/DAL972)).